Reading from the N-terminus, the 1150-residue chain is MTAVRRSTRIRTKSQVIEEDYDDEQNTSAQHVESDKITAKTQHEEEEEQDTGESEESSSEDDYEDQDDDDYVDTATAKRKSRKRKPKSASNTSSKRQKKKPTSAQKSAVSHAPAYHRSKKDQDQYLEIAKDFQPTELFDILSTSEDVSIEELLREWLETYSENRDKFLQEFINLLLNCCGSVARVEDHDVHSNESSNETIGEIQLLFQRQKLHEFYLLISKENKKRKNFKMGPLYQNFAEFMTKLLEVANDLQLLYVESDEDDTQIVTGNLVLDLLTWLSSFSVCKIRCFRYISTLTLYLFQDYLTQQAVNLEKNYLAKLSKQLSLEEKKKRPNNKTLEKLESTIAETQGSKVVIDSIIDNIVKLCFVHRYKDVSDLIRSESMLHLSIWIKNYPEYFLKVTFLKYFGWLLSDNSVSVRLQVTKILPHLIIQNHNSKSTDNSAIRQVFERFKTKILEVAIRDVNLDVRIHSIQVLTEASSLGYLDDSEILIISSLMFDEEFDPFKTSSFNKRSKFLSTVAKFLARVIKEKFDEFIKTHEDLPKEVDGLEVGPVVQVGIFIKILNDSLIYHLKDCAEVDSRTKIRMLTQAAEFLSPYISTHLKTICNLLISDTESNELIQKLQNSANNNSDDEDVDDEELDITPLFPIDRNSTILYLNVFHGLCAGANNPKIQTKDSVKEIVLPLFYDLLNAASIESADILCPLLESFITFSLDDWISIGYETELKKITDKTIKAFMDSTIGNSKVDMKYDIFAKFIHHIHHFEKKELQEKFLNQIATLKIHLKKFLQEKMDPNNSRDDYKDLTCSLYELYINKLTILGRDYPIEVDEELLQLFLNNFVSRIPIMFQDFDDSTAQEINFKMLVLLATWNLEKWREIIEKVRDYENSISKDLRSVWKPIAAIIGRLNTLVISLAATNETFENINSLFYLKWSACTSLMDIIVAIKIFELKLPADATTWRYSMSEQFPFYLHDNASKVLLKIFLYLESLFAKQVDVQLERVADEDANLNDLPETGFFENIETEFLLFTVKLKGLMKLNILDERFASRVALNKEKLGPLFKKIVDDTIMENPEPNKKNIQKAKSNQTQREKAPLQPNSERETDHANTENNDPDIPMTIDLEPIEESSQNNSELAPIEEHPTVVDAIDNSDEITQD.

Over residues 1 to 12 (MTAVRRSTRIRT) the composition is skewed to basic residues. The segment at 1–122 (MTAVRRSTRI…PAYHRSKKDQ (122 aa)) is disordered. S28 carries the phosphoserine modification. Over residues 32–43 (VESDKITAKTQH) the composition is skewed to basic and acidic residues. The segment covering 44–72 (EEEEEQDTGESEESSSEDDYEDQDDDDYV) has biased composition (acidic residues). The span at 77–87 (AKRKSRKRKPK) shows a compositional bias: basic residues. A coiled-coil region spans residues 305–349 (LTQQAVNLEKNYLAKLSKQLSLEEKKKRPNNKTLEKLESTIAETQ). The SCD domain occupies 367–457 (FVHRYKDVSD…ERFKTKILEV (91 aa)). S628 bears the Phosphoserine mark. The segment at 1065–1150 (ENPEPNKKNI…IDNSDEITQD (86 aa)) is disordered. A compositionally biased stretch (basic and acidic residues) spans 1083 to 1101 (QREKAPLQPNSERETDHAN).

Belongs to the SCC3 family. Interacts directly with MCD1 in cohesin complex. Cohesin complexes are composed of the SMC1 and SMC3 heterodimer attached via their hinge domain, MCD1 which link them, and IRR1/SCC3, which interacts with MCD1. The cohesin complex also interacts with SCC2, which is required for its association with chromosomes. Interacts with LIN1. In terms of processing, acetylated by ECO1.

The protein localises to the nucleus. The protein resides in the chromosome. It is found in the centromere. Its function is as follows. Component of cohesin complex, a complex required for the cohesion of sister chromatids after DNA replication. The cohesin complex apparently forms a large proteinaceous ring within which sister chromatids can be trapped. At anaphase, the MCD1/SCC1 subunit of the complex is cleaved and dissociates from chromatin, allowing sister chromatids to segregate. The cohesin complex may also play a role in spindle pole assembly during mitosis. This Saccharomyces cerevisiae (strain ATCC 204508 / S288c) (Baker's yeast) protein is Cohesin subunit SCC3 (IRR1).